The chain runs to 839 residues: MDYLTTFTGKSGRLLRGTASRLWGLGGGGEARQVRFEDYLREPAPGDPGCGPGELRPPSPTSPEGPDTGQKKTLDKKDGRRMSFQKPKGTIEYTVESRDSLNSIALKFDTTPNELVQLNKLFSRAVVTGQVLYVPDPEYVSSVESSPSLSPVSPLSPTSSEAEFDKTTTPDVVHPKEAPPSSTESSIRPARVVSSTSEEEEAFTEKFLKINCKYITNGKGTVSGVLLVTPNNIMFDPHKTDPLVQENGCEEYGIMCPMEEVMSAAMYKEILDSKLKESLPIEVDQLSGRGFCHSKKMTGVPAEETDSRSRDQGNDSVSTAPRSTEESLSEDVFTESELSPIREELPSSELRQEKSSDASSESVQTVSQIEVESLTAASESADVPDHTNANSGRSSSEVGALSHETGLSSLEIATKEGDKATGNLQEVSGPKEQSTDIKGQDNQDSFHHENSLQQEAGEDSLSSGETVELTEKPTVLKDQQGKELKRDSETEVEELRKLWKTHSMQQAKQQRDTIQQVAQRESKHRGAPADAHGEGSSLLKEKRRHRLHKFLCLRVGKPMRKTFVSQASATMQQYAQRDKKHEYWFAVPQERTDHLYAFFIQWSPEIYAEDTGEYTREPGFIVVKKMAESGPDEAPAGEAAAREWEITTREDINSKQAAPAKADLEPESFRPNLSDPSELLLPDQIEKLTKHLPPRTIGYPWTLVYGTGKHGTSLKTLYRTMTGLDTPVLMVIKDSDGQVFGALASEPFKVSDGFYGTGETFVFTFCPEFEVFKWTGDNMFFIKGDMDSLAFGGGGGEFALWLDGDLYHGRSHSCKTFGNHTLSKKEDFFIQDIEIWAFE.

The disordered stretch occupies residues aspartate 38–isoleucine 91. The segment covering glycine 69–arginine 81 has biased composition (basic and acidic residues). Serine 83 is subject to Phosphoserine. The LysM domain maps to isoleucine 91–valine 134. The residue at position 111 (threonine 111) is a Phosphothreonine. Positions valine 140 to glutamate 161 are enriched in low complexity. The tract at residues valine 140 to serine 195 is disordered. Residues glutamate 163–glutamate 177 are compositionally biased toward basic and acidic residues. 3 positions are modified to phosphoserine: serine 194, serine 195, and serine 197. In terms of domain architecture, GRAM spans lysine 206–valine 261. Serine 287, serine 327, and serine 329 each carry phosphoserine. 2 disordered regions span residues cysteine 292–leucine 401 and lysine 415–lysine 540. At threonine 334 the chain carries Phosphothreonine. Serine 339 bears the Phosphoserine mark. A compositionally biased stretch (basic and acidic residues) spans proline 340–serine 356. Polar residues-rich tracts occupy residues aspartate 357–serine 378 and threonine 387–glutamate 397. Composition is skewed to basic and acidic residues over residues glutamine 433–asparagine 450 and leucine 469–lysine 497. The residue at position 488 (serine 488) is a Phosphoserine. The segment covering histidine 502–glutamine 519 has biased composition (polar residues). Residues arginine 543–threonine 570 form a mediates oxidative antimutator activity region. Positions threonine 648 to serine 677 are disordered. The TLDc domain occupies glutamate 678–glutamate 839.

This sequence belongs to the OXR1 family.

It is found in the mitochondrion. Its function is as follows. May be involved in protection from oxidative damage. The chain is Oxidation resistance protein 1 (Oxr1) from Rattus norvegicus (Rat).